Reading from the N-terminus, the 364-residue chain is Protein-glutamate methylesterase/protein-glutamine glutaminase (364 aa).

Positions Arg7–Glu124 constitute a Response regulatory domain. Asp58 carries the post-translational modification 4-aspartylphosphate. The region spanning Glu167–Ser364 is the CheB-type methylesterase domain. Residues Ser181, His208, and Asp308 contribute to the active site.

The protein belongs to the CheB family. Phosphorylated by CheA. Phosphorylation of the N-terminal regulatory domain activates the methylesterase activity.

The protein localises to the cytoplasm. It carries out the reaction [protein]-L-glutamate 5-O-methyl ester + H2O = L-glutamyl-[protein] + methanol + H(+). The catalysed reaction is L-glutaminyl-[protein] + H2O = L-glutamyl-[protein] + NH4(+). Its function is as follows. Involved in chemotaxis. Part of a chemotaxis signal transduction system that modulates chemotaxis in response to various stimuli. Catalyzes the demethylation of specific methylglutamate residues introduced into the chemoreceptors (methyl-accepting chemotaxis proteins or MCP) by CheR. Also mediates the irreversible deamidation of specific glutamine residues to glutamic acid. This Methanosarcina barkeri (strain Fusaro / DSM 804) protein is Protein-glutamate methylesterase/protein-glutamine glutaminase.